The sequence spans 759 residues: NADP-dependent malic enzyme (759 aa).

Residues 1 to 428 are malic enzyme; the sequence is MDDQLKQSAL…KLTEFVYKTN (428 aa). Y39 acts as the Proton donor in catalysis. Position 56 is an N6-acetyllysine (K56). K94 acts as the Proton acceptor in catalysis. A divalent metal cation is bound by residues E136, D137, and D162. NADP(+)-binding positions include 195 to 198, N288, and N320; that span reads AGAA. The segment at 429–759 is phosphate acetyltransferase; required for oligomerization, inhibition by acetyl-CoA and activation by glutamate, aspartate, and glucose-6-phosphate; the sequence is LFMKPIFSQA…AVVEAQTQPL (331 aa).

In the N-terminal section; belongs to the malic enzymes family. The protein in the C-terminal section; belongs to the phosphate acetyltransferase and butyryltransferase family. In terms of assembly, homooligomer, possibly an octamer. It depends on Mg(2+) as a cofactor. Mn(2+) is required as a cofactor.

The enzyme catalyses (S)-malate + NADP(+) = pyruvate + CO2 + NADPH. It catalyses the reaction oxaloacetate + H(+) = pyruvate + CO2. Its activity is regulated as follows. Inhibited by 4 mM Mg(2+) and acetyl-CoA, competitively inhibited by fumarate and oxaloacetate. Activated by glutamate and aspartate, glucose-6-phosphate, acetyl-phosphate and 2 mM KCl. Catalyzes the decarboxylation of malate to pyruvate. In vitro, shows malolactic enzyme activity in the presence of NADPH. However, it is unlikely that this activity is of relevance in E.coli, which produces little NADPH. The sequence is that of NADP-dependent malic enzyme (maeB) from Escherichia coli (strain K12).